The following is a 188-amino-acid chain: Type II secretion system protein H (188 aa).

The propeptide at 1-10 (MKRSTRKQQG) is leader sequence. The residue at position 11 (phenylalanine 11) is an N-methylphenylalanine. The chain crosses the membrane as a helical span at residues 13–35 (LLEMMLVVLLAGIAAGMVVMAFP).

The protein belongs to the GSP H family. Type II secretion is composed of four main components: the outer membrane complex, the inner membrane complex, the cytoplasmic secretion ATPase and the periplasm-spanning pseudopilus. Interacts with core component OutG. In terms of processing, cleaved by prepilin peptidase. Methylated by prepilin peptidase at the amino group of the N-terminal phenylalanine once the leader sequence is cleaved by prepilin peptidase.

It localises to the cell inner membrane. In terms of biological role, component of the type II secretion system required for the energy-dependent secretion of extracellular factors such as proteases and toxins from the periplasm. Part of the pseudopilus tip complex that is critical for the recognition and binding of secretion substrates. The sequence is that of Type II secretion system protein H (outH) from Pectobacterium carotovorum subsp. carotovorum (Erwinia carotovora subsp. carotovora).